A 976-amino-acid polypeptide reads, in one-letter code: Mast/stem cell growth factor receptor kita (976 aa).

The signal sequence occupies residues 1–21 (MEYHCVLFTVLLQLIIQPGRS). Over 22-515 (RPTITPEGPR…NTVPHELFTP (494 aa)) the chain is Extracellular. 5 consecutive Ig-like C2-type domains span residues 23–105 (PTIT…VYVK), 100–199 (IYVY…LTVR), 206–301 (PPIT…VWVN), 308–402 (INIT…FEVH), and 399–504 (FEVH…FSIS). Asparagine 39 and asparagine 47 each carry an N-linked (GlcNAc...) asparagine glycan. 4 disulfides stabilise this stretch: cysteine 44-cysteine 89, cysteine 131-cysteine 180, cysteine 146-cysteine 177, and cysteine 228-cysteine 285. Asparagine 282, asparagine 309, asparagine 315, asparagine 352, asparagine 449, and asparagine 477 each carry an N-linked (GlcNAc...) asparagine glycan. The cysteines at positions 422 and 488 are disulfide-linked. A helical transmembrane segment spans residues 516-536 (LLIGFVAAAVILVLILIVLTY). Residues 537-976 (KYMQKPKYQI…DRSSPSHPVV (440 aa)) lie on the Cytoplasmic side of the membrane. Position 559 (tyrosine 559) interacts with Mg(2+). 2 positions are modified to phosphotyrosine; by autocatalysis: tyrosine 559 and tyrosine 561. One can recognise a Protein kinase domain in the interval 580 to 922 (LRFGKTLGSG…ISDSTKHIYL (343 aa)). Residues 587–594 (GSGAFGKV), lysine 614, and 662–668 (EYCCFGD) each bind ATP. Residues tyrosine 691 and tyrosine 707 each carry the phosphotyrosine; by autocatalysis modification. The active-site Proton acceptor is aspartate 777. Arginine 781 provides a ligand contact to ATP. Mg(2+) is bound by residues asparagine 782 and aspartate 795. Phosphotyrosine; by autocatalysis is present on residues tyrosine 808 and tyrosine 921. The disordered stretch occupies residues 929–976 (PAAPGPREESSSHVHRLNSVGSHSTATQPLLSSNDVFLDRSSPSHPVV). Over residues 947–976 (SVGSHSTATQPLLSSNDVFLDRSSPSHPVV) the composition is skewed to polar residues.

The protein belongs to the protein kinase superfamily. Tyr protein kinase family. CSF-1/PDGF receptor subfamily. Ubiquitinated. Rapidly ubiquitinated after autophosphorylation induced by kitlg/scf binding, leading to internalization and degradation. Post-translationally, autophosphorylated on tyrosine residues. Phosphorylated tyrosine residues are important for interaction with specific binding partners. In terms of tissue distribution, expressed in cells of the neural crest-melanocyte lineage. In the embryo, also expressed in mesodermal cells that give rise to hematopoietic precursors, notochord, neural crest-derived cells of the branchial arches, pineal gland, retina and mechanoreceptive sensory cells of lateral line neuromasts. Not detected in primordial germ cells or larval gut.

The protein localises to the cell membrane. It catalyses the reaction L-tyrosyl-[protein] + ATP = O-phospho-L-tyrosyl-[protein] + ADP + H(+). Tyrosine-protein kinase that acts as a cell-surface receptor for the cytokine kitlg/scf and plays a role in the regulation of cell survival and proliferation, hematopoiesis, stem cell maintenance, gametogenesis, and in mast cell development, migration and function. Required for the migration of cells in the melanocyte lineage and the survival of embryonic melanocytes. Required for the differentiation of some, but not all, melanocytes. Not essential for hematopoiesis or primordial germ cell development. The chain is Mast/stem cell growth factor receptor kita (kita) from Danio rerio (Zebrafish).